Consider the following 158-residue polypeptide: Transcription elongation factor GreB (158 aa).

A coiled-coil region spans residues 53–75 (KRRLREIDRRVRFLTKRLEVLQI).

It belongs to the GreA/GreB family. GreB subfamily.

Necessary for efficient RNA polymerase transcription elongation past template-encoded arresting sites. The arresting sites in DNA have the property of trapping a certain fraction of elongating RNA polymerases that pass through, resulting in locked ternary complexes. Cleavage of the nascent transcript by cleavage factors such as GreA or GreB allows the resumption of elongation from the new 3'terminus. GreB releases sequences of up to 9 nucleotides in length. This chain is Transcription elongation factor GreB, found in Pasteurella multocida (strain Pm70).